The primary structure comprises 125 residues: Actin, alpha skeletal muscle (125 aa).

The protein belongs to the actin family. In terms of assembly, polymerization of globular actin (G-actin) leads to a structural filament (F-actin) in the form of a two-stranded helix. Each actin can bind to 4 others. In terms of processing, methylated at His-75 by SETD3.

The protein resides in the cytoplasm. It is found in the cytoskeleton. Its function is as follows. Actins are highly conserved proteins that are involved in various types of cell motility and are ubiquitously expressed in all eukaryotic cells. This chain is Actin, alpha skeletal muscle, found in Pleurodeles waltl (Iberian ribbed newt).